The sequence spans 142 residues: Coactosin-like protein (142 aa).

N-acetylalanine is present on alanine 2. Residues 2–130 form the ADF-H domain; it reads ATKIDKEACR…EEDFIRSELK (129 aa). A Phosphoserine modification is found at serine 23. A flexible and important for F-actin binding region spans residues 66-75; it reads TGDAMSKRSK. N6-acetyllysine is present on lysine 102. Residue serine 141 is modified to Phosphoserine.

The protein belongs to the actin-binding proteins ADF family. Coactosin subfamily. As to quaternary structure, interacts with 5-lipoxygenase (ALOX5/5LO) in a calcium-independent manner. Binds to F-actin with a stoichiometry of 1:2.

It localises to the cytoplasm. The protein resides in the cytoskeleton. The protein localises to the nucleus. Its function is as follows. Binds to F-actin in a calcium-independent manner. Has no direct effect on actin depolymerization. Acts as a chaperone for ALOX5 (5LO), influencing both its stability and activity in leukotrienes synthesis. This chain is Coactosin-like protein, found in Rattus norvegicus (Rat).